The following is a 328-amino-acid chain: Phosphate acyltransferase (328 aa).

This sequence belongs to the PlsX family. In terms of assembly, homodimer. Probably interacts with PlsY.

It localises to the cytoplasm. It catalyses the reaction a fatty acyl-[ACP] + phosphate = an acyl phosphate + holo-[ACP]. Its pathway is lipid metabolism; phospholipid metabolism. Its function is as follows. Catalyzes the reversible formation of acyl-phosphate (acyl-PO(4)) from acyl-[acyl-carrier-protein] (acyl-ACP). This enzyme utilizes acyl-ACP as fatty acyl donor, but not acyl-CoA. The sequence is that of Phosphate acyltransferase from Staphylococcus haemolyticus (strain JCSC1435).